The following is an 87-amino-acid chain: Putative defensin-like protein 169 (87 aa).

An N-terminal signal peptide occupies residues 1–21 (MKKTFSFTVLILFVIPLLVTG). 4 cysteine pairs are disulfide-bonded: Cys36/Cys86, Cys48/Cys74, Cys53/Cys80, and Cys57/Cys82.

It belongs to the DEFL family.

The protein localises to the secreted. In Arabidopsis thaliana (Mouse-ear cress), this protein is Putative defensin-like protein 169.